The sequence spans 250 residues: MRKAIIAGNWKMNNTISQGLKLVEELKPLVADANCDVVVCPPTLALDAVVKATEGTNIKVGAQNMHFEESGAFTGETAPAMLEELGVKYVILGHSERRQYFGENDADLNKKMKKAFEHNLTPILCIGETLEEREADVTEEVLAKQIKLDLAGLTEAQIAETVIAYEPIWAIGTGKTATSDQAEETIAFVRKTVAGMFGAEAAEKMRIQYGGSVKPATIKEQMAKPNIDGGLIGGASLKAADFAAIVNFDK.

Residue 9–11 (NWK) participates in substrate binding. The active-site Electrophile is H94. The active-site Proton acceptor is E166. Substrate is bound by residues G172, S212, and 233–234 (GG).

The protein belongs to the triosephosphate isomerase family. As to quaternary structure, homodimer.

It is found in the cytoplasm. It catalyses the reaction D-glyceraldehyde 3-phosphate = dihydroxyacetone phosphate. Its pathway is carbohydrate biosynthesis; gluconeogenesis. It participates in carbohydrate degradation; glycolysis; D-glyceraldehyde 3-phosphate from glycerone phosphate: step 1/1. In terms of biological role, involved in the gluconeogenesis. Catalyzes stereospecifically the conversion of dihydroxyacetone phosphate (DHAP) to D-glyceraldehyde-3-phosphate (G3P). The sequence is that of Triosephosphate isomerase from Clostridium novyi (strain NT).